A 292-amino-acid chain; its full sequence is tRNA pseudouridine synthase B (292 aa).

Catalysis depends on aspartate 38, which acts as the Nucleophile.

This sequence belongs to the pseudouridine synthase TruB family. Type 1 subfamily.

The catalysed reaction is uridine(55) in tRNA = pseudouridine(55) in tRNA. Functionally, responsible for synthesis of pseudouridine from uracil-55 in the psi GC loop of transfer RNAs. The sequence is that of tRNA pseudouridine synthase B from Gloeobacter violaceus (strain ATCC 29082 / PCC 7421).